Consider the following 201-residue polypeptide: Probable GTP-binding protein EngB (201 aa).

In terms of domain architecture, EngB-type G spans 22-197 (TFPEYAFIGR…LNYIESINKE (176 aa)). Residues 30–37 (GRSNVGKS), 57–61 (GKTML), 75–78 (DLPG), 142–145 (TKAD), and 175–178 (ITSS) each bind GTP. The Mg(2+) site is built by S37 and T59.

This sequence belongs to the TRAFAC class TrmE-Era-EngA-EngB-Septin-like GTPase superfamily. EngB GTPase family. Mg(2+) is required as a cofactor.

Necessary for normal cell division and for the maintenance of normal septation. The polypeptide is Probable GTP-binding protein EngB (Bacteroides fragilis (strain YCH46)).